A 28-amino-acid chain; its full sequence is Ranatuerin-2LT (28 aa).

Cysteine 23 and cysteine 28 are oxidised to a cystine.

In terms of tissue distribution, expressed by the skin glands.

The protein localises to the secreted. In terms of biological role, has antibacterial activity. The protein is Ranatuerin-2LT of Rana latastei (Italian agile frog).